Consider the following 326-residue polypeptide: tRNA-modifying protein YgfZ (326 aa).

Folate contacts are provided by W27 and W189.

The protein belongs to the tRNA-modifying YgfZ family.

It is found in the cytoplasm. Functionally, folate-binding protein involved in regulating the level of ATP-DnaA and in the modification of some tRNAs. It is probably a key factor in regulatory networks that act via tRNA modification, such as initiation of chromosomal replication. This Shigella boydii serotype 18 (strain CDC 3083-94 / BS512) protein is tRNA-modifying protein YgfZ.